We begin with the raw amino-acid sequence, 435 residues long: Nuclear hormone receptor family member nhr-14 (435 aa).

A DNA-binding region (nuclear receptor) is located at residues 17–92; that stretch reads ADFCVVCGDK…DGMKPEAIQN (76 aa). 2 consecutive NR C4-type zinc fingers follow at residues 20 to 40 and 56 to 80; these read CVVCGDKAIGKHYGAVACNGC and CRFNKQCNIDKDHRNACRYCRFQKC. Positions 91–126 are disordered; sequence QNERDRIGSTKRRKRSGANSENNSDSEGTPSPKIEV. The segment covering 107-119 has biased composition (polar residues); sequence GANSENNSDSEGT. In terms of domain architecture, NR LBD spans 131–355; sequence VSRKLIEMLL…KRDTISPKIE (225 aa).

Belongs to the nuclear hormone receptor family. In terms of tissue distribution, expressed in intestine and head neurons in young adults.

It localises to the nucleus. Its function is as follows. Orphan nuclear receptor. Transcriptional repressor of intestinal metal transporter smf-3 and genes of the innate immune response. Inhibits nuclear localization of transcription factor pqm-1; in response to pathogen stress, may facilitate translocation of pqm-1, leading to transcriptional activation of genes involved in innate immunity and iron uptake. The polypeptide is Nuclear hormone receptor family member nhr-14 (nhr-14) (Caenorhabditis elegans).